A 219-amino-acid polypeptide reads, in one-letter code: uncharacterized protein (219 aa).

The signal sequence occupies residues 1–26 (MNDRGVPNSRTGPSLLALLPAANSYA). Disordered regions lie at residues 36–57 (AVGVGGGSYKSPTRGSPGTRGG) and 88–219 (SGLG…GLCE). Over residues 127–173 (LSPPSALGSSPAGRGRPAPAIAAAKSSPLSASAAPGRCGARPRAPSR) the composition is skewed to low complexity. Residues 176-202 (RERRPRGNPRAPLRRGARGRRRSHTRG) are compositionally biased toward basic residues.

This is an uncharacterized protein from Gallid herpesvirus 2 (strain Chicken/Md5/ATCC VR-987) (GaHV-2).